The sequence spans 138 residues: MLQPKRTKYRRTHRLQHDKGEAHTGNKVSFGKFGLQAKTSAWITARQIESARIAITRYMGREGQVFIRIFPQLSLTSKPIGVRMGKGKGSPEKWVAVAKVNTMLFEVSGVKDEVAKEALRLGSYKLPVKSKIVLKESE.

Over residues 1 to 14 (MLQPKRTKYRRTHR) the composition is skewed to basic residues. Residues 1–24 (MLQPKRTKYRRTHRLQHDKGEAHT) are disordered. The span at 15 to 24 (LQHDKGEAHT) shows a compositional bias: basic and acidic residues.

This sequence belongs to the universal ribosomal protein uL16 family. In terms of assembly, part of the 50S ribosomal subunit.

Its function is as follows. Binds 23S rRNA and is also seen to make contacts with the A and possibly P site tRNAs. This chain is Large ribosomal subunit protein uL16, found in Mycoplasma mobile (strain ATCC 43663 / 163K / NCTC 11711) (Mesomycoplasma mobile).